Here is a 199-residue protein sequence, read N- to C-terminus: Interleukin-11 (199 aa).

A signal peptide spans 1–21; the sequence is MNCVCRLVLVVLSLWPDRVVA. Residues 182-190 form an important for interaction with IL11RA and for the stimulation of cell proliferation region; the sequence is HLTLDWAVR.

Belongs to the IL-6 superfamily. As to quaternary structure, interacts with IL11RA to associate with IL6ST, giving rise to a multimeric signaling complex.

It localises to the secreted. Its function is as follows. Cytokine that stimulates the proliferation of hematopoietic stem cells and megakaryocyte progenitor cells and induces megakaryocyte maturation resulting in increased platelet production. Also promotes the proliferation of hepatocytes in response to liver damage. Binding to its receptor formed by IL6ST and IL11RA activates a signaling cascade that promotes cell proliferation. Signaling leads to the activation of intracellular protein kinases and the phosphorylation of STAT3. The interaction with the membrane-bound IL11RA and IL6ST stimulates 'classic signaling', whereas the binding of IL11 and soluble IL11RA to IL6ST stimulates 'trans-signaling'. The chain is Interleukin-11 from Rattus norvegicus (Rat).